A 226-amino-acid polypeptide reads, in one-letter code: Large ribosomal subunit protein uL4 (226 aa).

The tract at residues 47-74 (GTAKAKTRSEVSGGGRKPWPQKHTGRAR) is disordered.

The protein belongs to the universal ribosomal protein uL4 family. As to quaternary structure, part of the 50S ribosomal subunit.

Its function is as follows. One of the primary rRNA binding proteins, this protein initially binds near the 5'-end of the 23S rRNA. It is important during the early stages of 50S assembly. It makes multiple contacts with different domains of the 23S rRNA in the assembled 50S subunit and ribosome. Functionally, forms part of the polypeptide exit tunnel. In Kosmotoga olearia (strain ATCC BAA-1733 / DSM 21960 / TBF 19.5.1), this protein is Large ribosomal subunit protein uL4.